Consider the following 150-residue polypeptide: Interleukin-17A (150 aa).

A signal peptide spans 1-17; that stretch reads MCLMLLLLLNLEATVKA. The interval 54–75 is disordered; that stretch reads SSRRPSDYLNRSTSPWTLSRNE. Over residues 62–72 the composition is skewed to polar residues; that stretch reads LNRSTSPWTLS. Residue N63 is glycosylated (N-linked (GlcNAc...) asparagine). Disulfide bonds link C89–C139 and C94–C141.

Belongs to the IL-17 family. Homodimer. Forms complexes with IL17RA and IL17RC receptors with 2:1 binding stoichiometry: two receptor chains for one interleukin molecule. IL17A homodimer preferentially drives the formation of IL17RA-IL17RC heterodimeric receptor complex. IL17A homodimer adopts an asymmetrical ternary structure with one IL17RA molecule, allowing for high affinity interactions of one IL17A monomer with one IL17RA molecule (via D1 and D2 domains), while disfavoring binding of a second IL17RA molecule on the other IL17A monomer. Heterodimer with IL17F. IL17A-IL17F forms complexes with IL17RA-IL17RC, but with lower affinity when compared to IL17A homodimer. IL17RA and IL17RC chains cannot distinguish between IL17A and IL17F molecules, potentially enabling the formation of topologically distinct complexes.

It localises to the secreted. In terms of biological role, effector cytokine of innate and adaptive immune system involved in antimicrobial host defense and maintenance of tissue integrity. Signals via IL17RA-IL17RC heterodimeric receptor complex, triggering homotypic interaction of IL17RA and IL17RC chains with TRAF3IP2 adapter. This leads to downstream TRAF6-mediated activation of NF-kappa-B and MAPkinase pathways ultimately resulting in transcriptional activation of cytokines, chemokines, antimicrobial peptides and matrix metalloproteinases, with potential strong immune inflammation. Plays an important role in connecting T cell-mediated adaptive immunity and acute inflammatory response to destroy extracellular bacteria and fungi. As a signature effector cytokine of T-helper 17 cells (Th17), primarily induces neutrophil activation and recruitment at infection and inflammatory sites. In airway epithelium, mediates neutrophil chemotaxis via induction of CXCL1 and CXCL5 chemokines. In secondary lymphoid organs, contributes to germinal center formation by regulating the chemotactic response of B cells to CXCL12 and CXCL13, enhancing retention of B cells within the germinal centers, B cell somatic hypermutation rate and selection toward plasma cells. Effector cytokine of a subset of gamma-delta T cells that functions as part of an inflammatory circuit downstream IL1B, TLR2 and IL23A-IL12B to promote neutrophil recruitment for efficient bacterial clearance. Effector cytokine of innate immune cells including invariant natural killer cell (iNKT) and group 3 innate lymphoid cells that mediate initial neutrophilic inflammation. Involved in the maintenance of the integrity of epithelial barriers during homeostasis and pathogen infection. Upon acute injury, has a direct role in epithelial barrier formation by regulating OCLN localization and tight junction biogenesis. As part of the mucosal immune response induced by commensal bacteria, enhances host's ability to resist pathogenic bacterial and fungal infections by promoting neutrophil recruitment and antimicrobial peptides release. In synergy with IL17F, mediates the production of antimicrobial beta-defensins DEFB1, DEFB103A, and DEFB104A by mucosal epithelial cells, limiting the entry of microbes through the epithelial barriers. Involved in antiviral host defense through various mechanisms. This chain is Interleukin-17A (Il17a), found in Rattus norvegicus (Rat).